Reading from the N-terminus, the 446-residue chain is Bifunctional protein GlmU (446 aa).

Residues 1 to 228 (MTKTAAVILA…AEELLGVNSR (228 aa)) form a pyrophosphorylase region. UDP-N-acetyl-alpha-D-glucosamine is bound by residues 9-12 (LAAG), K23, Q72, 77-78 (GT), 100-102 (YGD), G140, E154, N169, and N226. D102 provides a ligand contact to Mg(2+). N226 contributes to the Mg(2+) binding site. Positions 229–249 (SELAAAEAVIQGRLREKAMEG) are linker. Positions 250–446 (GATLTAPETV…AHMRRLTGKN (197 aa)) are N-acetyltransferase. Residues R315 and K333 each contribute to the UDP-N-acetyl-alpha-D-glucosamine site. H345 acts as the Proton acceptor in catalysis. Residues Y348 and N359 each coordinate UDP-N-acetyl-alpha-D-glucosamine. Acetyl-CoA-binding positions include A362, 368–369 (NY), S387, A405, and R422.

In the N-terminal section; belongs to the N-acetylglucosamine-1-phosphate uridyltransferase family. It in the C-terminal section; belongs to the transferase hexapeptide repeat family. As to quaternary structure, homotrimer. Requires Mg(2+) as cofactor.

It is found in the cytoplasm. It carries out the reaction alpha-D-glucosamine 1-phosphate + acetyl-CoA = N-acetyl-alpha-D-glucosamine 1-phosphate + CoA + H(+). The enzyme catalyses N-acetyl-alpha-D-glucosamine 1-phosphate + UTP + H(+) = UDP-N-acetyl-alpha-D-glucosamine + diphosphate. The protein operates within nucleotide-sugar biosynthesis; UDP-N-acetyl-alpha-D-glucosamine biosynthesis; N-acetyl-alpha-D-glucosamine 1-phosphate from alpha-D-glucosamine 6-phosphate (route II): step 2/2. Its pathway is nucleotide-sugar biosynthesis; UDP-N-acetyl-alpha-D-glucosamine biosynthesis; UDP-N-acetyl-alpha-D-glucosamine from N-acetyl-alpha-D-glucosamine 1-phosphate: step 1/1. It functions in the pathway bacterial outer membrane biogenesis; LPS lipid A biosynthesis. Functionally, catalyzes the last two sequential reactions in the de novo biosynthetic pathway for UDP-N-acetylglucosamine (UDP-GlcNAc). The C-terminal domain catalyzes the transfer of acetyl group from acetyl coenzyme A to glucosamine-1-phosphate (GlcN-1-P) to produce N-acetylglucosamine-1-phosphate (GlcNAc-1-P), which is converted into UDP-GlcNAc by the transfer of uridine 5-monophosphate (from uridine 5-triphosphate), a reaction catalyzed by the N-terminal domain. This is Bifunctional protein GlmU from Rhodospirillum rubrum (strain ATCC 11170 / ATH 1.1.1 / DSM 467 / LMG 4362 / NCIMB 8255 / S1).